The following is a 349-amino-acid chain: UPF0324 inner membrane protein YeiH (349 aa).

Residues 1-12 are Periplasmic-facing; it reads MTELTLQNHRRT. Residues 13–35 form a helical membrane-spanning segment; that stretch reads MWHFIPGLALSAVITGVALWGGA. The Cytoplasmic portion of the chain corresponds to 36 to 38; it reads IPA. A helical transmembrane segment spans residues 39-61; the sequence is VAGAGFSALTLAILLGMVIGNTV. Topologically, residues 62-99 are periplasmic; it reads YPQIWKQCDGGVLFAKQHLLRLGIILYGFRLTFSQIAD. Residues 100–122 form a helical membrane-spanning segment; the sequence is VGISGIVIDVLTLSSTFMLACFL. Over 123–131 the chain is Cytoplasmic; sequence GQKVFGLDR. Residues 132–151 traverse the membrane as a helical segment; sequence HTSWLIGAGSSICGAAAVLA. Residues 152 to 162 lie on the Periplasmic side of the membrane; it reads TEPVVKAEASK. The helical transmembrane segment at 163–185 threads the bilayer; it reads VTVAVATVVIFGTIAIFLYPAMY. Topologically, residues 186-261 are cytoplasmic; sequence PLLAHWFSPE…SPATGAEKSK (76 aa). The chain crosses the membrane as a helical span at residues 262-284; it reads ITIPWFAIFFIVVAIFNSFHLLP. Over 285–290 the chain is Periplasmic; sequence KAVVDM. Residues 291 to 313 form a helical membrane-spanning segment; sequence LVTLDTVLLAMAMAALGLTTHVS. Topologically, residues 314–322 are cytoplasmic; it reads ALKKAGAKP. Residues 323–345 traverse the membrane as a helical segment; it reads LLMALALFAWLIIGGGAINVLIH. At 346 to 349 the chain is on the periplasmic side; the sequence is SLIA.

It belongs to the UPF0324 family.

It localises to the cell inner membrane. This chain is UPF0324 inner membrane protein YeiH (yeiH), found in Salmonella typhi.